The sequence spans 336 residues: Ornithine carbamoyltransferase, catabolic (336 aa).

Residues 62-65, Q89, R113, and 140-143 contribute to the carbamoyl phosphate site; these read STRT and HPTQ. L-ornithine is bound by residues N172, D236, and 240 to 241; that span reads SM. Carbamoyl phosphate contacts are provided by residues 277-278 and R322; that span reads CL.

This sequence belongs to the aspartate/ornithine carbamoyltransferase superfamily. OTCase family.

It localises to the cytoplasm. The catalysed reaction is carbamoyl phosphate + L-ornithine = L-citrulline + phosphate + H(+). It functions in the pathway amino-acid degradation; L-arginine degradation via ADI pathway; carbamoyl phosphate from L-arginine: step 2/2. Functionally, reversibly catalyzes the transfer of the carbamoyl group from carbamoyl phosphate (CP) to the N(epsilon) atom of ornithine (ORN) to produce L-citrulline. The sequence is that of Ornithine carbamoyltransferase, catabolic from Staphylococcus aureus (strain MRSA252).